Consider the following 2202-residue polypeptide: Activating signal cointegrator 1 complex subunit 3 (2202 aa).

The segment at 1-400 is required for interaction with ASCC2; it reads MALPRLTGAL…RQRDADVEKI (400 aa). At serine 12 the chain carries Phosphoserine. Coiled-coil stretches lie at residues 18 to 79 and 328 to 356; these read KQDN…AAKQ and IQSE…KAGE. Residues 486-669 form the Helicase ATP-binding 1 domain; that stretch reads ETAYNTNENM…FLHVNPYIGL (184 aa). Residue 499 to 506 participates in ATP binding; that stretch reads APTGAGKT. Lysine 572 carries the N6-acetyllysine modification. Residues 611 to 614 carry the DEVH box motif; it reads DEVH. One can recognise a Helicase C-terminal 1 domain in the interval 728–914; it reads TVRTAMSLIE…GTVTNVEEAV (187 aa). The SEC63 1 domain maps to 978–1287; sequence STDLGRTASH…GAEAVCIINF (310 aa). The Helicase ATP-binding 2 domain occupies 1336-1511; it reads HTLYHTDCNV…WLNIKQMGLF (176 aa). 1349–1356 is an ATP binding site; that stretch reads APTGSGKT. The DEIH box motif lies at 1453 to 1456; it reads DEIH. Residues 1544–1739 enclose the Helicase C-terminal 2 domain; the sequence is PAFQAIRSHS…VLSDHLNAEI (196 aa). In terms of domain architecture, SEC63 2 spans 1812–2176; the sequence is PLTYGRIASY…LGLDQQYDIY (365 aa). Phosphoserine is present on serine 2195.

This sequence belongs to the helicase family. Identified in the ASCC complex that contains ASCC1, ASCC2 and ASCC3. Functions as scaffolding subunit that interacts directly with both ASCC1 and ASCC2. Interacts directly with ALKBH3, and thereby recruits ALKBH3 to the ASCC complex. Part of the ASC-1/TRIP4 complex, that contains TRIP4, ASCC1, ASCC2 and ASCC3. Part of the RQT (ribosome quality control trigger) complex, that contains ASCC2, ASCC3 and TRIP4. Associates with ribosomes; recruited to collided ribosomes. Interacts with ZCCHC4. Interacts with ZNF598. Interacts with RPS3. In terms of tissue distribution, ubiquitous.

It localises to the nucleus. The protein resides in the nucleus speckle. It is found in the cytoplasm. The protein localises to the cytosol. The enzyme catalyses Couples ATP hydrolysis with the unwinding of duplex DNA by translocating in the 3'-5' direction.. It catalyses the reaction ATP + H2O = ADP + phosphate + H(+). Functionally, ATPase involved both in DNA repair and rescue of stalled ribosomes. 3'-5' DNA helicase involved in repair of alkylated DNA: promotes DNA unwinding to generate single-stranded substrate needed for ALKBH3, enabling ALKBH3 to process alkylated N3-methylcytosine (3mC) within double-stranded regions. Also involved in activation of the ribosome quality control (RQC) pathway, a pathway that degrades nascent peptide chains during problematic translation. Drives the splitting of stalled ribosomes that are ubiquitinated in a ZNF598-dependent manner, as part of the ribosome quality control trigger (RQT) complex. Part of the ASC-1 complex that enhances NF-kappa-B, SRF and AP1 transactivation. The polypeptide is Activating signal cointegrator 1 complex subunit 3 (ASCC3) (Homo sapiens (Human)).